Consider the following 294-residue polypeptide: Nucleotide-binding protein LVIS_0651 (294 aa).

Residue 12 to 19 (GMSGAGKT) participates in ATP binding. A GTP-binding site is contributed by 62–65 (DLRS).

Belongs to the RapZ-like family.

In terms of biological role, displays ATPase and GTPase activities. This chain is Nucleotide-binding protein LVIS_0651, found in Levilactobacillus brevis (strain ATCC 367 / BCRC 12310 / CIP 105137 / JCM 1170 / LMG 11437 / NCIMB 947 / NCTC 947) (Lactobacillus brevis).